We begin with the raw amino-acid sequence, 489 residues long: Glycogen synthase (489 aa).

An ADP-alpha-D-glucose-binding site is contributed by Lys-15.

The protein belongs to the glycosyltransferase 1 family. Bacterial/plant glycogen synthase subfamily.

It carries out the reaction [(1-&gt;4)-alpha-D-glucosyl](n) + ADP-alpha-D-glucose = [(1-&gt;4)-alpha-D-glucosyl](n+1) + ADP + H(+). The protein operates within glycan biosynthesis; glycogen biosynthesis. In terms of biological role, synthesizes alpha-1,4-glucan chains using ADP-glucose. The protein is Glycogen synthase of Francisella tularensis subsp. holarctica (strain FTNF002-00 / FTA).